Reading from the N-terminus, the 143-residue chain is Large ribosomal subunit protein uL11 (143 aa).

This sequence belongs to the universal ribosomal protein uL11 family. In terms of assembly, part of the ribosomal stalk of the 50S ribosomal subunit. Interacts with L10 and the large rRNA to form the base of the stalk. L10 forms an elongated spine to which L12 dimers bind in a sequential fashion forming a multimeric L10(L12)X complex. Post-translationally, one or more lysine residues are methylated.

In terms of biological role, forms part of the ribosomal stalk which helps the ribosome interact with GTP-bound translation factors. This is Large ribosomal subunit protein uL11 from Saccharophagus degradans (strain 2-40 / ATCC 43961 / DSM 17024).